Reading from the N-terminus, the 393-residue chain is Elongation factor Tu (393 aa).

The tr-type G domain occupies 10–203; the sequence is KPHVNIGTIG…AVDSFIPDPV (194 aa). A G1 region spans residues 19–26; that stretch reads GHVDHGKT. 19–26 contributes to the GTP binding site; that stretch reads GHVDHGKT. T26 serves as a coordination point for Mg(2+). Positions 60–64 are G2; sequence GITIS. Residues 81–84 are G3; sequence DCPG. GTP-binding positions include 81–85 and 136–139; these read DCPGH and NKVD. The segment at 136 to 139 is G4; the sequence is NKVD. Positions 173 to 175 are G5; it reads SAL.

It belongs to the TRAFAC class translation factor GTPase superfamily. Classic translation factor GTPase family. EF-Tu/EF-1A subfamily. In terms of assembly, monomer.

The protein resides in the cytoplasm. It catalyses the reaction GTP + H2O = GDP + phosphate + H(+). GTP hydrolase that promotes the GTP-dependent binding of aminoacyl-tRNA to the A-site of ribosomes during protein biosynthesis. The sequence is that of Elongation factor Tu from Pelodictyon phaeoclathratiforme (strain DSM 5477 / BU-1).